The sequence spans 228 residues: Interferon-induced transmembrane protein 10 (228 aa).

At 1-154 (MREGKRGPPC…PDTTEVNDYY (154 aa)) the chain is on the extracellular side. The segment at 29–49 (AQGPGQCPAPLGDPASTTDGA) is disordered. A helical membrane pass occupies residues 155–175 (LWSIFNFVYLNFCCLGFIALA). 2 S-palmitoyl cysteine lipidation sites follow: C167 and C168. Over 176–200 (YSLKVRDKKLLNDLNGAVEDAKTAR) the chain is Cytoplasmic. The chain crosses the membrane as a helical span at residues 201-221 (LFNITSSALAASCIILVFIFL). Residues 222–228 (RYPLTDY) are Extracellular-facing.

It belongs to the CD225/Dispanin family.

Its subcellular location is the cell membrane. This Homo sapiens (Human) protein is Interferon-induced transmembrane protein 10 (IFITM10).